The primary structure comprises 288 residues: Protoheme IX farnesyltransferase (288 aa).

9 helical membrane-spanning segments follow: residues 6 to 26 (VILY…LLSL), 44 to 64 (FLDS…NNVI), 89 to 109 (LAIL…VKFI), 111 to 131 (VVCF…YSFF), 138 to 158 (ISTI…YCSV), 169 to 189 (LLIM…ILHF), 213 to 233 (IILH…INSI), 238 to 258 (LIIS…ELTI), and 268 to 288 (IFRW…FGFV).

It belongs to the UbiA prenyltransferase family. Protoheme IX farnesyltransferase subfamily.

The protein localises to the cell membrane. It carries out the reaction heme b + (2E,6E)-farnesyl diphosphate + H2O = Fe(II)-heme o + diphosphate. Its pathway is porphyrin-containing compound metabolism; heme O biosynthesis; heme O from protoheme: step 1/1. Its function is as follows. Converts heme B (protoheme IX) to heme O by substitution of the vinyl group on carbon 2 of heme B porphyrin ring with a hydroxyethyl farnesyl side group. The chain is Protoheme IX farnesyltransferase from Buchnera aphidicola subsp. Baizongia pistaciae (strain Bp).